The following is a 391-amino-acid chain: tRNA (cytosine(38)-C(5))-methyltransferase (391 aa).

An SAM-dependent MTase C5-type domain is found at 4–391 (LRALELYSGI…VAKLIKILCD (388 aa)). S-adenosyl-L-methionine contacts are provided by residues 13 to 15 (IGG), D34, 57 to 58 (IE), and S76. The active site involves C79. Residue S376 coordinates S-adenosyl-L-methionine.

The protein belongs to the class I-like SAM-binding methyltransferase superfamily. C5-methyltransferase family.

The protein resides in the cytoplasm. The enzyme catalyses cytidine(38) in tRNA + S-adenosyl-L-methionine = 5-methylcytidine(38) in tRNA + S-adenosyl-L-homocysteine + H(+). Its function is as follows. Specifically methylates cytosine 38 in the anticodon loop of tRNA(Asp). Has higher activity on tRNA(Asp) modified with queuosine at position 34. The protein is tRNA (cytosine(38)-C(5))-methyltransferase (TRDMT1) of Bos taurus (Bovine).